The following is a 195-amino-acid chain: Neurensin-1 (195 aa).

Transmembrane regions (helical) follow at residues 66–86 (LISGTVFVILGLTVLAVGFLV) and 120–140 (AVLFCIGGTSMAGCLLMSVFV).

This sequence belongs to the VMP family. As to expression, expressed in brain. Not detectable in other tissues tested.

It is found in the membrane. Its subcellular location is the cell projection. The protein resides in the neuron projection. In terms of biological role, may play an important role in neural organelle transport, and in transduction of nerve signals or in nerve growth. May play a role in neurite extension. May play a role in memory consolidation. The protein is Neurensin-1 of Homo sapiens (Human).